The chain runs to 138 residues: Large ribosomal subunit protein uL16c (138 aa).

It belongs to the universal ribosomal protein uL16 family. As to quaternary structure, part of the 50S ribosomal subunit.

Its subcellular location is the plastid. The protein resides in the chloroplast. This is Large ribosomal subunit protein uL16c from Chaetosphaeridium globosum (Charophycean green alga).